The primary structure comprises 473 residues: ATP synthase subunit beta (473 aa).

Gly-158–Thr-165 lines the ATP pocket.

It belongs to the ATPase alpha/beta chains family. F-type ATPases have 2 components, CF(1) - the catalytic core - and CF(0) - the membrane proton channel. CF(1) has five subunits: alpha(3), beta(3), gamma(1), delta(1), epsilon(1). CF(0) has three main subunits: a(1), b(2) and c(9-12). The alpha and beta chains form an alternating ring which encloses part of the gamma chain. CF(1) is attached to CF(0) by a central stalk formed by the gamma and epsilon chains, while a peripheral stalk is formed by the delta and b chains. The F(1)F(0) complex interacts with SpoIIIJ and YqjG; YqgA is found in the same complex.

It is found in the cell membrane. It localises to the membrane raft. It carries out the reaction ATP + H2O + 4 H(+)(in) = ADP + phosphate + 5 H(+)(out). Its function is as follows. Produces ATP from ADP in the presence of a proton gradient across the membrane. The catalytic sites are hosted primarily by the beta subunits. The sequence is that of ATP synthase subunit beta from Bacillus subtilis (strain 168).